The primary structure comprises 341 residues: Ferrochelatase (341 aa).

Fe cation-binding residues include His210 and Glu291.

It belongs to the ferrochelatase family.

The protein localises to the cytoplasm. It carries out the reaction heme b + 2 H(+) = protoporphyrin IX + Fe(2+). The protein operates within porphyrin-containing compound metabolism; protoheme biosynthesis; protoheme from protoporphyrin-IX: step 1/1. Functionally, catalyzes the ferrous insertion into protoporphyrin IX. The polypeptide is Ferrochelatase (Alcanivorax borkumensis (strain ATCC 700651 / DSM 11573 / NCIMB 13689 / SK2)).